The chain runs to 65 residues: Large ribosomal subunit protein bL35 (65 aa).

The segment covering 1 to 15 (MPKMKTKKSASKRFT) has biased composition (basic residues). Positions 1-27 (MPKMKTKKSASKRFTARPNGSFKRGQA) are disordered.

This sequence belongs to the bacterial ribosomal protein bL35 family.

The chain is Large ribosomal subunit protein bL35 from Cupriavidus pinatubonensis (strain JMP 134 / LMG 1197) (Cupriavidus necator (strain JMP 134)).